Here is a 473-residue protein sequence, read N- to C-terminus: Hyaluronidase-2 (473 aa).

An N-terminal signal peptide occupies residues 1–20 (MRAGLGPIITLALVLEVAWA). Disulfide bonds link Cys47-Cys340 and Cys211-Cys227. 2 N-linked (GlcNAc...) asparagine glycosylation sites follow: Asn74 and Asn103. The Proton donor role is filled by Glu135. Asn357 carries an N-linked (GlcNAc...) asparagine glycan. The EGF-like domain maps to 361-439 (ATQYCSWTQC…YLGWGGEQCQ (79 aa)). 3 disulfide bridges follow: Cys365–Cys376, Cys370–Cys427, and Cys429–Cys438. N-linked (GlcNAc...) asparagine glycosylation occurs at Asn390. Residue Asn448 is the site of GPI-anchor amidated asparagine; alternate attachment. A glycan (N-linked (GlcNAc...) asparagine; alternate) is linked at Asn448. Residues 449–473 (ASRAWAGSHLTSLLGLVAVALTWTL) constitute a propeptide, removed in mature form.

Belongs to the glycosyl hydrolase 56 family. In terms of assembly, interacts with MST1R. In terms of tissue distribution, widely expressed, with highest expression levels in kidney, lung and liver (at protein level).

Its subcellular location is the cell membrane. The enzyme catalyses Random hydrolysis of (1-&gt;4)-linkages between N-acetyl-beta-D-glucosamine and D-glucuronate residues in hyaluronate.. Functionally, catalyzes hyaluronan degradation into small fragments that are endocytosed and degraded in lysosomes by HYAL1 and exoglycosidases. Essential for the breakdown of extracellular matrix hyaluronan. This Mus musculus (Mouse) protein is Hyaluronidase-2 (Hyal2).